Reading from the N-terminus, the 120-residue chain is Small ribosomal subunit protein eS24 (120 aa).

Positions 101–120 (RDAGTKQKKGGSKGGQGAKG) are disordered.

Belongs to the eukaryotic ribosomal protein eS24 family.

The protein is Small ribosomal subunit protein eS24 of Saccharolobus solfataricus (strain ATCC 35092 / DSM 1617 / JCM 11322 / P2) (Sulfolobus solfataricus).